We begin with the raw amino-acid sequence, 500 residues long: ATP synthase subunit alpha (500 aa).

Position 168–175 (168–175 (GDRQTGKT)) interacts with ATP.

Belongs to the ATPase alpha/beta chains family. As to quaternary structure, F-type ATPases have 2 components, CF(1) - the catalytic core - and CF(0) - the membrane proton channel. CF(1) has five subunits: alpha(3), beta(3), gamma(1), delta(1), epsilon(1). CF(0) has three main subunits: a(1), b(2) and c(9-12). The alpha and beta chains form an alternating ring which encloses part of the gamma chain. CF(1) is attached to CF(0) by a central stalk formed by the gamma and epsilon chains, while a peripheral stalk is formed by the delta and b chains.

The protein localises to the cell membrane. The enzyme catalyses ATP + H2O + 4 H(+)(in) = ADP + phosphate + 5 H(+)(out). Functionally, produces ATP from ADP in the presence of a proton gradient across the membrane. The alpha chain is a regulatory subunit. The polypeptide is ATP synthase subunit alpha (Streptococcus suis (strain 98HAH33)).